Here is a 178-residue protein sequence, read N- to C-terminus: Tetratricopeptide repeat protein 9C (178 aa).

TPR repeat units lie at residues 15-48, 79-114, and 115-148; these read ASSF…LRSL, ADCY…QPEN, and VKAL…APKD.

It belongs to the TTC9 family.

The protein is Tetratricopeptide repeat protein 9C (ttc9c) of Xenopus tropicalis (Western clawed frog).